A 229-amino-acid chain; its full sequence is Uracil-DNA glycosylase (229 aa).

Residue Asp-64 is the Proton acceptor of the active site.

The protein belongs to the uracil-DNA glycosylase (UDG) superfamily. UNG family.

Its subcellular location is the cytoplasm. The catalysed reaction is Hydrolyzes single-stranded DNA or mismatched double-stranded DNA and polynucleotides, releasing free uracil.. In terms of biological role, excises uracil residues from the DNA which can arise as a result of misincorporation of dUMP residues by DNA polymerase or due to deamination of cytosine. The protein is Uracil-DNA glycosylase of Escherichia coli O7:K1 (strain IAI39 / ExPEC).